A 241-amino-acid polypeptide reads, in one-letter code: Trypsin-10 (241 aa).

The N-terminal stretch at 1–13 (MKSLIFVLLLGAV) is a signal peptide. A propeptide spans 14 to 19 (FAEEDK) (activation peptide). Residues 20–239 (IVGGYECTRH…LSGWVRDTMA (220 aa)) enclose the Peptidase S1 domain. 6 disulfides stabilise this stretch: Cys-26–Cys-155, Cys-44–Cys-60, Cys-128–Cys-228, Cys-135–Cys-201, Cys-166–Cys-180, and Cys-191–Cys-215. Active-site charge relay system residues include His-59 and Asp-103. Ser-195 acts as the Charge relay system in catalysis.

Belongs to the peptidase S1 family.

The protein resides in the secreted. Its subcellular location is the extracellular space. It carries out the reaction Preferential cleavage: Arg-|-Xaa, Lys-|-Xaa.. The sequence is that of Trypsin-10 from Gadus morhua (Atlantic cod).